A 256-amino-acid polypeptide reads, in one-letter code: Large ribosomal subunit protein bL21c (256 aa).

The N-terminal 55 residues, 1 to 55 (MASATLAFSCSSLCATLKLPQNLNPLLLNVPPLSKPFSGVVSPPSLSRLSLLPVA), are a transit peptide targeting the chloroplast.

As to quaternary structure, component of the chloroplast large ribosomal subunit (LSU). Mature 70S chloroplast ribosomes of higher plants consist of a small (30S) and a large (50S) subunit. The 30S small subunit contains 1 molecule of ribosomal RNA (16S rRNA) and 24 different proteins. The 50S large subunit contains 3 rRNA molecules (23S, 5S and 4.5S rRNA) and 33 different proteins.

Its subcellular location is the plastid. The protein localises to the chloroplast. In terms of biological role, component of the chloroplast ribosome (chloro-ribosome), a dedicated translation machinery responsible for the synthesis of chloroplast genome-encoded proteins, including proteins of the transcription and translation machinery and components of the photosynthetic apparatus. The protein is Large ribosomal subunit protein bL21c (RPL21) of Spinacia oleracea (Spinach).